The chain runs to 488 residues: Glutamate synthase [NADPH] small chain (488 aa).

Residues E38–N69 form the 4Fe-4S ferredoxin-type domain.

[4Fe-4S] cluster serves as cofactor.

The catalysed reaction is 2 L-glutamate + NADP(+) = L-glutamine + 2-oxoglutarate + NADPH + H(+). The protein operates within amino-acid biosynthesis; L-glutamate biosynthesis via GLT pathway; L-glutamate from 2-oxoglutarate and L-glutamine (NADP(+) route): step 1/1. The sequence is that of Glutamate synthase [NADPH] small chain (gltD) from Mycobacterium tuberculosis (strain CDC 1551 / Oshkosh).